The primary structure comprises 58 residues: Sec-independent protein translocase protein TatA (58 aa).

The chain crosses the membrane as a helical span at residues 1–21 (MLSNIGFPGLILILVAILILF).

Belongs to the TatA/E family. Forms a complex with TatC.

The protein resides in the cell membrane. Functionally, part of the twin-arginine translocation (Tat) system that transports large folded proteins containing a characteristic twin-arginine motif in their signal peptide across membranes. TatA could form the protein-conducting channel of the Tat system. This is Sec-independent protein translocase protein TatA from Bacillus cytotoxicus (strain DSM 22905 / CIP 110041 / 391-98 / NVH 391-98).